The following is a 611-amino-acid chain: MLAWRQLNDLEETVTYDVIIRDGLWFDGTGNAPLTRTLGIRDGVVATVAAGALDETGCPEVVDAAGKWVVPGFIDVHTHYDAEVLLDPGLRESVRHGVTTVLLGNCSLSTVYANSEDAADLFSRVEAVPREFVLGALRDNQTWSTPAEYIEAIDALPLGPNVSSLLGHSDLRTAVLGLDRATDDTVRPTEAELAKMAKLLDEALEAGMLGMSGMDAAIDKLDGDRFRSRALPSTFATWRERRKLISVLRHRGRILQSAPDVDNPVSALLFFLASSRIFNRRKGVRMSMLVSADAKSMPLAVHVFGLGTRVLNKLLGSQVRFQHLPVPFELYSDGIDLPVFEEFGAGTAALHLRDQLQRNELLADRSYRRSFRREFDRIKLGPSLWHRDFHDAVIVECPDKSLIGKSFGAIADERGLHPLDAFLDVLVDNGERNVRWTTIVANHRPNQLNKLAAEPSVHMGFSDAGAHLRNMAFYNFGLRLLKRARDADRAGQPFLSIERAVYRLTGELAEWFGIGAGTLRQGDRADFAVIDPTHLDESVDGYHEEAVPYYGGLRRMVNRNDATVVATGVGGTVVFRGGQFGGQFRDGYGQNVKSGRYLRAGELGAALSRSA.

It belongs to the metallo-dependent hydrolases superfamily. N-acyl-D-amino-acid deacylase family.

This is an uncharacterized protein from Mycobacterium bovis (strain ATCC BAA-935 / AF2122/97).